The following is a 343-amino-acid chain: Lipopolysaccharide core biosynthesis glycosyltransferase LpsD (343 aa).

The protein belongs to the glycosyltransferase group 1 family. Glycosyltransferase 4 subfamily.

It functions in the pathway bacterial outer membrane biogenesis; LPS core biosynthesis. In Rhizobium meliloti (strain 1021) (Ensifer meliloti), this protein is Lipopolysaccharide core biosynthesis glycosyltransferase LpsD (lpsD).